Reading from the N-terminus, the 262-residue chain is Thiazole synthase (262 aa).

The active-site Schiff-base intermediate with DXP is Lys-97. 1-deoxy-D-xylulose 5-phosphate-binding positions include Gly-158, 185-186 (AG), and 207-208 (NT). A disordered region spans residues 243–262 (DKAQASTPTVGQPFWHSAEY).

It belongs to the ThiG family. In terms of assembly, homotetramer. Forms heterodimers with either ThiH or ThiS.

It localises to the cytoplasm. It catalyses the reaction [ThiS sulfur-carrier protein]-C-terminal-Gly-aminoethanethioate + 2-iminoacetate + 1-deoxy-D-xylulose 5-phosphate = [ThiS sulfur-carrier protein]-C-terminal Gly-Gly + 2-[(2R,5Z)-2-carboxy-4-methylthiazol-5(2H)-ylidene]ethyl phosphate + 2 H2O + H(+). Its pathway is cofactor biosynthesis; thiamine diphosphate biosynthesis. In terms of biological role, catalyzes the rearrangement of 1-deoxy-D-xylulose 5-phosphate (DXP) to produce the thiazole phosphate moiety of thiamine. Sulfur is provided by the thiocarboxylate moiety of the carrier protein ThiS. In vitro, sulfur can be provided by H(2)S. The polypeptide is Thiazole synthase (Neisseria meningitidis serogroup B (strain ATCC BAA-335 / MC58)).